A 630-amino-acid polypeptide reads, in one-letter code: uncharacterized protein (630 aa).

4 helical membrane passes run 254-274 (MFYA…ELRV), 504-524 (IALL…LTSI), 564-584 (MIFA…SMVF), and 601-621 (IIVI…AVLF).

The protein resides in the cell membrane. This is an uncharacterized protein from Mycoplasma genitalium (strain ATCC 33530 / DSM 19775 / NCTC 10195 / G37) (Mycoplasmoides genitalium).